The primary structure comprises 62 residues: Photosystem II reaction center protein Z (62 aa).

The next 2 membrane-spanning stretches (helical) occupy residues 8 to 28 (ALFA…VILA) and 41 to 61 (FSGA…NSFI).

The protein belongs to the PsbZ family. PSII is composed of 1 copy each of membrane proteins PsbA, PsbB, PsbC, PsbD, PsbE, PsbF, PsbH, PsbI, PsbJ, PsbK, PsbL, PsbM, PsbT, PsbY, PsbZ, Psb30/Ycf12, at least 3 peripheral proteins of the oxygen-evolving complex and a large number of cofactors. It forms dimeric complexes.

It localises to the plastid. It is found in the chloroplast thylakoid membrane. In terms of biological role, may control the interaction of photosystem II (PSII) cores with the light-harvesting antenna, regulates electron flow through the 2 photosystem reaction centers. PSII is a light-driven water plastoquinone oxidoreductase, using light energy to abstract electrons from H(2)O, generating a proton gradient subsequently used for ATP formation. In Chara vulgaris (Common stonewort), this protein is Photosystem II reaction center protein Z.